The chain runs to 360 residues: DNA replication and repair protein RecF (360 aa).

30–37 provides a ligand contact to ATP; the sequence is GHNGSGKT.

Belongs to the RecF family.

Its subcellular location is the cytoplasm. Functionally, the RecF protein is involved in DNA metabolism; it is required for DNA replication and normal SOS inducibility. RecF binds preferentially to single-stranded, linear DNA. It also seems to bind ATP. In Shewanella amazonensis (strain ATCC BAA-1098 / SB2B), this protein is DNA replication and repair protein RecF.